Here is a 1911-residue protein sequence, read N- to C-terminus: Protein TIC 214 (1911 aa).

6 helical membrane-spanning segments follow: residues 41–61 (IINS…FSIG), 81–103 (ISAT…YAPL), 108–128 (GKPH…FFWN), 147–167 (FNIQ…HFIL), 195–215 (IGWL…LFWI), and 238–258 (IFSI…PLPI). Disordered regions lie at residues 265–299 (ETSE…STEE), 798–817 (DSEE…KEEN), and 1599–1647 (NQNQ…RKKK). Acidic residues predominate over residues 268-297 (ETEESEENEEESDIEITSEPKEQDEEEGST). 2 stretches are compositionally biased toward basic and acidic residues: residues 1603–1615 (QEKK…RDLG) and 1623–1635 (QKQK…EKNY).

It belongs to the TIC214 family. In terms of assembly, part of the Tic complex.

It is found in the plastid. The protein localises to the chloroplast inner membrane. In terms of biological role, involved in protein precursor import into chloroplasts. May be part of an intermediate translocation complex acting as a protein-conducting channel at the inner envelope. The chain is Protein TIC 214 from Lemna minor (Common duckweed).